A 471-amino-acid chain; its full sequence is Putative multidrug resistance protein MdtD (471 aa).

The Periplasmic segment spans residues 1-11 (MTDLPDSTRWQ). The chain crosses the membrane as a helical span at residues 12-32 (LWIVAFGFFMQSLDTTIVNTA). The Cytoplasmic portion of the chain corresponds to 33-48 (LPSMAQSLGESPLHMH). A helical transmembrane segment spans residues 49 to 69 (MVIVSYVLTVAVMLPASGWLA). The Periplasmic portion of the chain corresponds to 70-76 (DKVGVRN). A helical transmembrane segment spans residues 77–97 (IFFTAIVLFTLGSLFCALSGT). The Cytoplasmic segment spans residues 98-101 (LNEL). The helical transmembrane segment at 102–124 (LLARALQGVGGAMMVPVGRLTVM) threads the bilayer. The Periplasmic segment spans residues 125-137 (KIVPREQYMAAMT). Residues 138–158 (FVTLPGQVGPLLGPALGGLLV) traverse the membrane as a helical segment. The Cytoplasmic segment spans residues 159 to 164 (EYASWH). The chain crosses the membrane as a helical span at residues 165–185 (WIFLINIPVGIIGAIATLMLM). At 186–196 (PNYTMQTRRFD) the chain is on the periplasmic side. A helical membrane pass occupies residues 197 to 217 (LSGFLLLAVGMAVLTLALDGS). Over 218 to 224 (KGTGLSP) the chain is Cytoplasmic. The helical transmembrane segment at 225–245 (LAIAGLVAVGVVALVLYLLHA) threads the bilayer. Topologically, residues 246–262 (RNNNRALFSLKLFRTRT) are periplasmic. The helical transmembrane segment at 263–283 (FSLGLAGSFAGRIGSGMLPFM) threads the bilayer. Residues 284–285 (TP) are Cytoplasmic-facing. The helical transmembrane segment at 286 to 306 (VFLQIGLGFSPFHAGLMMIPM) threads the bilayer. Residues 307 to 341 (VLGSMGMKRIVVQVVNRFGYRRVLVATTLGLSLVT) lie on the Periplasmic side of the membrane. Residues 342-362 (LLFMTTALLGWYYVLPFVLFL) traverse the membrane as a helical segment. The Cytoplasmic portion of the chain corresponds to 363-395 (QGMVNSTRFSSMNTLTLKDLPDNLASSGNSLLS). A helical membrane pass occupies residues 396–416 (MIMQLSMSIGVTIAGLLLGLF). The Periplasmic portion of the chain corresponds to 417–430 (GSQHVSVDSGTTQT). A helical membrane pass occupies residues 431 to 451 (VFMYTWLSMAFIIALPAFIFA). The Cytoplasmic segment spans residues 452–471 (RVPNDTHQNVAISRRKRSAQ).

Belongs to the major facilitator superfamily. TCR/Tet family.

Its subcellular location is the cell inner membrane. The sequence is that of Putative multidrug resistance protein MdtD from Escherichia coli (strain SMS-3-5 / SECEC).